We begin with the raw amino-acid sequence, 576 residues long: Formate--tetrahydrofolate ligase 1 (576 aa).

Position 69–76 (69–76 (TPLGEGKT)) interacts with ATP.

This sequence belongs to the formate--tetrahydrofolate ligase family.

It catalyses the reaction (6S)-5,6,7,8-tetrahydrofolate + formate + ATP = (6R)-10-formyltetrahydrofolate + ADP + phosphate. It participates in one-carbon metabolism; tetrahydrofolate interconversion. This is Formate--tetrahydrofolate ligase 1 from Rubrobacter xylanophilus (strain DSM 9941 / JCM 11954 / NBRC 16129 / PRD-1).